The sequence spans 99 residues: UPF0213 protein PC1_0597 (99 aa).

The GIY-YIG domain occupies 8 to 83 (PQWYLYILRT…KQLSKNQKER (76 aa)).

It belongs to the UPF0213 family.

This chain is UPF0213 protein PC1_0597, found in Pectobacterium carotovorum subsp. carotovorum (strain PC1).